Consider the following 401-residue polypeptide: Elongation factor Tu 2 (401 aa).

The tr-type G domain maps to 10–209 (KPHVNVGTIG…AVDEYIPTPV (200 aa)). Positions 19–26 (GHVDHGKT) are G1. Residue 19–26 (GHVDHGKT) participates in GTP binding. Residue Thr-26 coordinates Mg(2+). The G2 stretch occupies residues 60 to 64 (GITIA). The segment at 81–84 (DCPG) is G3. GTP-binding positions include 81 to 85 (DCPGH) and 136 to 139 (NKVD). The segment at 136–139 (NKVD) is G4. The G5 stretch occupies residues 174–176 (SAL).

This sequence belongs to the TRAFAC class translation factor GTPase superfamily. Classic translation factor GTPase family. EF-Tu/EF-1A subfamily. In terms of assembly, monomer.

Its subcellular location is the cytoplasm. The catalysed reaction is GTP + H2O = GDP + phosphate + H(+). Its function is as follows. GTP hydrolase that promotes the GTP-dependent binding of aminoacyl-tRNA to the A-site of ribosomes during protein biosynthesis. The polypeptide is Elongation factor Tu 2 (Roseiflexus sp. (strain RS-1)).